The sequence spans 415 residues: Glucose-1-phosphate adenylyltransferase (415 aa).

Residues Y100, G165, 182 to 183 (EK), and S200 each bind alpha-D-glucose 1-phosphate.

The protein belongs to the bacterial/plant glucose-1-phosphate adenylyltransferase family. As to quaternary structure, homotetramer.

The catalysed reaction is alpha-D-glucose 1-phosphate + ATP + H(+) = ADP-alpha-D-glucose + diphosphate. It participates in glycan biosynthesis; glycogen biosynthesis. In terms of biological role, involved in the biosynthesis of ADP-glucose, a building block required for the elongation reactions to produce glycogen. Catalyzes the reaction between ATP and alpha-D-glucose 1-phosphate (G1P) to produce pyrophosphate and ADP-Glc. This chain is Glucose-1-phosphate adenylyltransferase, found in Bifidobacterium animalis subsp. lactis (strain AD011).